We begin with the raw amino-acid sequence, 1989 residues long: Exophilin-5 (1989 aa).

Positions 7–63 constitute a RabBD domain; sequence AFDFSFLNDEEARKILQVLERNEELQRAEKDRISKLQKTKRDIRWLQGVTGEWFEEI. Disordered stretches follow at residues 93-117 and 348-391; these read NDPIELPTSRSKNVTNQKKPTPFSS and TQSK…FLRA. Polar residues-rich tracts occupy residues 100–111 and 359–376; these read TSRSKNVTNQKK and HQQSPKRTPLSSIIWNRS. The segment covering 377–389 has biased composition (basic and acidic residues); the sequence is DSSRDRENQEEFL. Phosphoserine is present on S603. Disordered stretches follow at residues 631-651, 806-827, and 882-933; these read FSQISDDRRNPQSPNLQNPTV, STASLPFIQEHRTPPSFPRTDQ, and AALP…NQKN. Residues 641–651 are compositionally biased toward polar residues; it reads PQSPNLQNPTV. 2 positions are modified to phosphoserine: S806 and S809. The segment covering 891-909 has biased composition (polar residues); the sequence is KNSSLDAPVVPSTTVFSRR. Positions 910 to 927 are enriched in basic and acidic residues; the sequence is SPSDKDPSLGEREEKDNA. Phosphoserine is present on residues S1028 and S1086. 3 disordered regions span residues 1094–1113, 1124–1152, and 1365–1493; these read EATERMTNVKSSGSTSVRKG, SCPSGEPHASTGREGRKKPLTSGMDASEL, and EIFS…TNCQ. Residues 1098–1110 show a composition bias toward polar residues; that stretch reads RMTNVKSSGSTSV. S1124 carries the post-translational modification Phosphoserine. The span at 1379-1390 shows a compositional bias: basic and acidic residues; the sequence is SENKKERGKKLQ. Low complexity predominate over residues 1416–1431; sequence SINSSNSGPSSLPALS. Over residues 1434 to 1447 the composition is skewed to polar residues; the sequence is NIGNSQTRRSSWEC. Phosphoserine is present on S1505. 2 disordered regions span residues 1521–1590 and 1644–1737; these read EETQ…NRSS and PEPT…PITF. Basic and acidic residues-rich tracts occupy residues 1551-1560, 1573-1589, and 1658-1670; these read ESRKAEDEMQ, NKNKTNLDDLVKGENRS, and RLSENGKHVKKSE. A compositionally biased stretch (polar residues) spans 1685–1709; that stretch reads THVSNQKSNSISQRHQNEFKNVSES. Phosphoserine is present on residues S1753, S1768, S1821, and S1851. The segment at 1921–1989 is disordered; the sequence is FLKDDLRNPP…LDENDKESEL (69 aa). Over residues 1933-1943 the composition is skewed to low complexity; it reads SESLSSNSPSS. The segment covering 1959–1989 has biased composition (acidic residues); that stretch reads YEDDPVDSDCDTDTTTDDEYYLDENDKESEL.

Interacts with RAB27A. In terms of tissue distribution, expressed in keratinocytes.

In terms of biological role, may act as Rab effector protein and play a role in vesicle trafficking. This chain is Exophilin-5, found in Homo sapiens (Human).